A 242-amino-acid chain; its full sequence is Biosynthetic peptidoglycan transglycosylase (242 aa).

Residues 19–39 (LMVVLAVFWGGGIALFSVAPV) form a helical membrane-spanning segment.

The protein belongs to the glycosyltransferase 51 family.

Its subcellular location is the cell inner membrane. It carries out the reaction [GlcNAc-(1-&gt;4)-Mur2Ac(oyl-L-Ala-gamma-D-Glu-L-Lys-D-Ala-D-Ala)](n)-di-trans,octa-cis-undecaprenyl diphosphate + beta-D-GlcNAc-(1-&gt;4)-Mur2Ac(oyl-L-Ala-gamma-D-Glu-L-Lys-D-Ala-D-Ala)-di-trans,octa-cis-undecaprenyl diphosphate = [GlcNAc-(1-&gt;4)-Mur2Ac(oyl-L-Ala-gamma-D-Glu-L-Lys-D-Ala-D-Ala)](n+1)-di-trans,octa-cis-undecaprenyl diphosphate + di-trans,octa-cis-undecaprenyl diphosphate + H(+). It participates in cell wall biogenesis; peptidoglycan biosynthesis. Its function is as follows. Peptidoglycan polymerase that catalyzes glycan chain elongation from lipid-linked precursors. The polypeptide is Biosynthetic peptidoglycan transglycosylase (Escherichia coli O139:H28 (strain E24377A / ETEC)).